The following is a 757-amino-acid chain: Dolichyl-diphosphooligosaccharide--protein glycosyltransferase subunit stt-3 (757 aa).

At 1–13 the chain is on the cytoplasmic side; that stretch reads MTSTTAARTASSR. The helical transmembrane segment at 14-34 threads the bilayer; the sequence is VGATTLLTIVVLALAWFVGFA. Topologically, residues 35-121 are lumenal; that stretch reads SRLFAIVRFE…VHIREVCVFL (87 aa). A DXD motif 1 motif is present at residues 49-51; it reads EFD. Asp51 contributes to the Mn(2+) binding site. The helical transmembrane segment at 122–140 threads the bilayer; the sequence is APTFSGLTAIATYLLTKEL. The Cytoplasmic segment spans residues 141 to 142; the sequence is WS. The helical transmembrane segment at 143–160 threads the bilayer; sequence PGAGLFAACFIAISPGYT. Residues 161-171 lie on the Lumenal side of the membrane; the sequence is SRSVAGSYDNE. Residues Asp169 and Glu171 each coordinate Mn(2+). The DXD motif 2 motif lies at 169–171; it reads DNE. The chain crosses the membrane as a helical span at residues 172–191; it reads GIAIFALQFTYYLWVKSLKT. The Cytoplasmic segment spans residues 192-193; it reads GS. A helical membrane pass occupies residues 194–208; it reads IMWASLCALSYFYMV. The Lumenal segment spans residues 209-210; it reads SA. 2 helical membrane-spanning segments follow: residues 211–235 and 236–261; these read WGGY…GRYS and SRLF…FVGF. Residues 262-269 lie on the Lumenal side of the membrane; the sequence is QPVRTSEH. Residues 270–289 traverse the membrane as a helical segment; the sequence is MPAFGVFGLLQIVALMHYAR. The Cytoplasmic portion of the chain corresponds to 290–299; it reads NRITRQQFMT. The chain crosses the membrane as a helical span at residues 300–320; it reads LFVGGLTILGALSVVVYFALV. At 321-358 the chain is on the lumenal side; that stretch reads WGGYVAPFSGRFYSLWDTGYAKIHIPIIASVSEHQPTT. The short motif at 350 to 353 is the SVSE motif element; that stretch reads SVSE. A helical transmembrane segment spans residues 359–381; sequence WVSFFFDLHITAAVFPVGLWYCI. Residues 382 to 387 are Cytoplasmic-facing; sequence KKVNDE. A helical transmembrane segment spans residues 388–404; sequence RVFIILYAVSAVYFAGV. Topologically, residues 405-408 are lumenal; that stretch reads MVRL. Arg407 serves as a coordination point for dolichyl diphosphooligosaccharide. A helical transmembrane segment spans residues 409 to 430; the sequence is MLTLTPAVCVLAGIGFSYTFEK. Residues 431-469 are Cytoplasmic-facing; that stretch reads YLKDEETKERSSSQSGTTKDEKLYDKAAKNVKSRNANDG. Residues 470–495 traverse the membrane as a helical segment; it reads DESGVSSNVRTIISIILVIFLLMFVV. The Lumenal segment spans residues 496-757; it reads HATYVTSNAY…IRPAPTASKA (262 aa). Positions 547-549 are interacts with target acceptor peptide in protein substrate; it reads WWD. The short motif at 547–551 is the WWDYG motif element; sequence WWDYG. Residue Tyr552 participates in dolichyl diphosphooligosaccharide binding. 2 N-linked (GlcNAc...) asparagine glycosylation sites follow: Asn559 and Asn566. N-linked (GlcNAc...) (high mannose) asparagine glycosylation occurs at Asn570. N-linked (GlcNAc...) asparagine glycosylation occurs at Asn584. A DK motif motif is present at residues 614–621; sequence DINKFLWM. The disordered stretch occupies residues 721–757; sequence RPTVKSEEATIPIKGKKATQGKNKKGVIRPAPTASKA. Residues 734-747 are compositionally biased toward basic residues; the sequence is KGKKATQGKNKKGV.

The protein belongs to the STT3 family. Component of the oligosaccharyltransferase (OST) complex. It depends on Mg(2+) as a cofactor. Mn(2+) serves as cofactor.

It is found in the endoplasmic reticulum membrane. The enzyme catalyses a di-trans,poly-cis-dolichyl diphosphooligosaccharide + L-asparaginyl-[protein] = N(4)-(oligosaccharide-(1-&gt;4)-N-acetyl-beta-D-glucosaminyl-(1-&gt;4)-N-acetyl-beta-D-glucosaminyl)-L-asparaginyl-[protein] + a di-trans,poly-cis-dolichyl diphosphate + H(+). The protein operates within protein modification; protein glycosylation. In terms of biological role, catalytic subunit of the oligosaccharyl transferase (OST) complex that catalyzes the initial transfer of a defined glycan (Glc(3)Man(9)GlcNAc(2) in eukaryotes) from the lipid carrier dolichol-pyrophosphate to an asparagine residue within an Asn-X-Ser/Thr consensus motif in nascent polypeptide chains, the first step in protein N-glycosylation. N-glycosylation occurs cotranslationally and the complex associates with the Sec61 complex at the channel-forming translocon complex that mediates protein translocation across the endoplasmic reticulum (ER). All subunits are required for a maximal enzyme activity. This subunit contains the active site and the acceptor peptide and donor lipid-linked oligosaccharide (LLO) binding pockets. In Caenorhabditis elegans, this protein is Dolichyl-diphosphooligosaccharide--protein glycosyltransferase subunit stt-3.